The following is a 178-amino-acid chain: Transcriptional repressor NrdR (178 aa).

The disordered stretch occupies residues 1 to 21 (MRCPFCGHEDTQVKDSRPHED). The segment at 3–34 (CPFCGHEDTQVKDSRPHEDGAAIRRRRICAAC) is a zinc-finger region. Basic and acidic residues predominate over residues 7–21 (GHEDTQVKDSRPHED). One can recognise an ATP-cone domain in the interval 49-139 (LYVVKADDRR…VHWDFRETKD (91 aa)).

The protein belongs to the NrdR family. It depends on Zn(2+) as a cofactor.

Negatively regulates transcription of bacterial ribonucleotide reductase nrd genes and operons by binding to NrdR-boxes. The sequence is that of Transcriptional repressor NrdR from Gluconacetobacter diazotrophicus (strain ATCC 49037 / DSM 5601 / CCUG 37298 / CIP 103539 / LMG 7603 / PAl5).